A 612-amino-acid chain; its full sequence is Threonine--tRNA ligase (612 aa).

Positions aspartate 218–proline 509 are catalytic. 3 residues coordinate Zn(2+): cysteine 310, histidine 361, and histidine 486.

Belongs to the class-II aminoacyl-tRNA synthetase family. Homodimer. Requires Zn(2+) as cofactor.

It localises to the cytoplasm. It catalyses the reaction tRNA(Thr) + L-threonine + ATP = L-threonyl-tRNA(Thr) + AMP + diphosphate + H(+). Functionally, catalyzes the attachment of threonine to tRNA(Thr) in a two-step reaction: L-threonine is first activated by ATP to form Thr-AMP and then transferred to the acceptor end of tRNA(Thr). Also edits incorrectly charged L-seryl-tRNA(Thr). This is Threonine--tRNA ligase from Helicobacter pylori (strain HPAG1).